We begin with the raw amino-acid sequence, 314 residues long: Coproporphyrin III ferrochelatase (314 aa).

Fe(2+) contacts are provided by His186 and Glu268.

It belongs to the ferrochelatase family.

The protein localises to the cytoplasm. It catalyses the reaction Fe-coproporphyrin III + 2 H(+) = coproporphyrin III + Fe(2+). It functions in the pathway porphyrin-containing compound metabolism; protoheme biosynthesis. Functionally, involved in coproporphyrin-dependent heme b biosynthesis. Catalyzes the insertion of ferrous iron into coproporphyrin III to form Fe-coproporphyrin III. This chain is Coproporphyrin III ferrochelatase, found in Lactococcus lactis subsp. lactis (strain IL1403) (Streptococcus lactis).